The sequence spans 421 residues: MTHILDDLSFRGLIQQQTDEAGLRELLDKEKISLYSGFDPTADSLHIGHLLPILMLRRFQLAGHRPIALVGGATGLIGDPSGKKAERTLNNEEIVREWSQKIKNQLSRFLDFEAEENPAIMANNYDWIGKMNVIDFLRDVGKNFGINYMLAKDTVSSRIETGISYTEFSYMILQSLDFLNLYRNQECKLQIGGSDQWGNITSGLELIRKSEENAKAFGLTIPLVTKADGTKFGKTEGGAIWLDKEKTSAYEFYQFWINTDDRDVVKYLKYFTFLSKEEIEDLAEKTETAPEKREAQKRLAEEVTVLVHGREAFEQAVNISKALFSGDIKQLTAEEVKVGFKGVPSLEVEKADELPLVEILVQSKLSPSKRQAREDITNGAVYVNGERRTDVADVLTADDRIEGQFTVIRRGKKKYFLLTYK.

L-tyrosine is bound at residue Tyr-35. The 'HIGH' region signature appears at 40–49 (PTADSLHIGH). L-tyrosine-binding residues include Tyr-170 and Gln-174. The short motif at 231–235 (KFGKT) is the 'KMSKS' region element. Residue Lys-234 coordinates ATP. In terms of domain architecture, S4 RNA-binding spans 354-420 (LPLVEILVQS…GKKKYFLLTY (67 aa)).

Belongs to the class-I aminoacyl-tRNA synthetase family. TyrS type 1 subfamily. As to quaternary structure, homodimer.

It localises to the cytoplasm. The enzyme catalyses tRNA(Tyr) + L-tyrosine + ATP = L-tyrosyl-tRNA(Tyr) + AMP + diphosphate + H(+). Its function is as follows. Catalyzes the attachment of tyrosine to tRNA(Tyr) in a two-step reaction: tyrosine is first activated by ATP to form Tyr-AMP and then transferred to the acceptor end of tRNA(Tyr). The protein is Tyrosine--tRNA ligase 1 of Bacillus licheniformis (strain ATCC 14580 / DSM 13 / JCM 2505 / CCUG 7422 / NBRC 12200 / NCIMB 9375 / NCTC 10341 / NRRL NRS-1264 / Gibson 46).